The chain runs to 285 residues: Alginate lyase (285 aa).

Positions 1–20 (MIKSNLVISSLAIVSSMSYA) are cleaved as a signal peptide.

This sequence belongs to the polysaccharide lyase 6 family.

It catalyses the reaction Eliminative cleavage of alginate to give oligosaccharides with 4-deoxy-alpha-L-erythro-hex-4-enuronosyl groups at their non-reducing ends and beta-D-mannuronate at their reducing end.. The polypeptide is Alginate lyase (alxM) (Photobacterium sp. (strain ATCC 43367)).